The sequence spans 421 residues: CinA-like protein (421 aa).

Belongs to the CinA family.

This is CinA-like protein from Mycobacterium sp. (strain MCS).